Reading from the N-terminus, the 174-residue chain is Probable adenylyl-sulfate kinase (174 aa).

Position 10-17 (10-17) interacts with ATP; sequence GPSGAGKT. Residue serine 84 is the Phosphoserine intermediate of the active site.

The protein belongs to the APS kinase family.

It carries out the reaction adenosine 5'-phosphosulfate + ATP = 3'-phosphoadenylyl sulfate + ADP + H(+). It functions in the pathway sulfur metabolism; hydrogen sulfide biosynthesis; sulfite from sulfate: step 2/3. Functionally, catalyzes the synthesis of activated sulfate. The sequence is that of Probable adenylyl-sulfate kinase (cysC) from Pyrococcus abyssi (strain GE5 / Orsay).